Consider the following 405-residue polypeptide: Phosphopentomutase (405 aa).

Residues Asp10, Asp303, His308, Asp344, His345, and His356 each coordinate Mn(2+).

This sequence belongs to the phosphopentomutase family. Mn(2+) is required as a cofactor.

It localises to the cytoplasm. The catalysed reaction is 2-deoxy-alpha-D-ribose 1-phosphate = 2-deoxy-D-ribose 5-phosphate. It catalyses the reaction alpha-D-ribose 1-phosphate = D-ribose 5-phosphate. It functions in the pathway carbohydrate degradation; 2-deoxy-D-ribose 1-phosphate degradation; D-glyceraldehyde 3-phosphate and acetaldehyde from 2-deoxy-alpha-D-ribose 1-phosphate: step 1/2. Isomerase that catalyzes the conversion of deoxy-ribose 1-phosphate (dRib-1-P) and ribose 1-phosphate (Rib-1-P) to deoxy-ribose 5-phosphate (dRib-5-P) and ribose 5-phosphate (Rib-5-P), respectively. The chain is Phosphopentomutase from Shewanella woodyi (strain ATCC 51908 / MS32).